Here is a 291-residue protein sequence, read N- to C-terminus: Peptide methionine sulfoxide reductase MsrB/MsrA (291 aa).

One can recognise a MsrB domain in the interval 1–124; that stretch reads MLANLQHLSD…NSAALRFVAR (124 aa). Cys113 acts as the Nucleophile in catalysis. The tract at residues 127-284 is peptide methionine sulfoxide reductase A; that stretch reads GTALFAAGCF…PGGYCHVSLH (158 aa). Cys135 is a catalytic residue.

In the N-terminal section; belongs to the MsrB Met sulfoxide reductase family. It in the C-terminal section; belongs to the MsrA Met sulfoxide reductase family.

It catalyses the reaction L-methionyl-[protein] + [thioredoxin]-disulfide + H2O = L-methionyl-(R)-S-oxide-[protein] + [thioredoxin]-dithiol. The catalysed reaction is L-methionyl-[protein] + [thioredoxin]-disulfide + H2O = L-methionyl-(S)-S-oxide-[protein] + [thioredoxin]-dithiol. The enzyme catalyses [thioredoxin]-disulfide + L-methionine + H2O = L-methionine (S)-S-oxide + [thioredoxin]-dithiol. Has an important function as a repair enzyme for proteins that have been inactivated by oxidation. Catalyzes the reversible oxidation-reduction of methionine sulfoxide in proteins to methionine. This chain is Peptide methionine sulfoxide reductase MsrB/MsrA (msrAB), found in Treponema pallidum (strain Nichols).